A 362-amino-acid chain; its full sequence is MAATPIRVIVSALVILSVLLLSSSLGVATETEIERNETEVRLMYEQWLVENRKNYNGLGEKERRFKIFKDNLKFVDEHNSVPDRTFEVGLTRFADLTNEEFRAIYLRKKMERTKDSVKTERYLYKEGDVLPDEVDWRANGAVVSVKDQGNCGSCWAFSAVGAVEGINQITTGELISLSEQELVDCDRGFVNAGCDGGIMNYAFEFIMKNGGIETDQDYPYNANDLGLCNADKNNNTRVVTIDGYEDVPRDDEKSLKKAVAHQPVSVAIEASSQAFQLYKSGVMTGTCGISLDHGVVVVGYGSTSGEDYWIIRNSWGLNWGDSGYVKLQRNIDDPFGKCGIAMMPSYPTKSSFPSSFDLLSEI.

A signal peptide spans 1–28 (MAATPIRVIVSALVILSVLLLSSSLGVA). Positions 29–129 (TETEIERNET…ERYLYKEGDV (101 aa)) are cleaved as a propeptide — activation peptide. A glycan (N-linked (GlcNAc...) asparagine) is linked at Asn-36. Intrachain disulfides connect Cys-151–Cys-194 and Cys-185–Cys-228. Cys-154 is a catalytic residue. N-linked (GlcNAc...) asparagine glycosylation is present at Asn-234. Cysteines 287 and 338 form a disulfide. Active-site residues include His-293 and Asn-313.

The protein belongs to the peptidase C1 family.

In terms of biological role, probable thiol protease. The protein is Probable cysteine protease RDL2 of Arabidopsis thaliana (Mouse-ear cress).